The following is a 249-amino-acid chain: Orotidine 5'-phosphate decarboxylase (249 aa).

Substrate contacts are provided by residues Asp21, Lys43, 72-81, Thr128, Arg193, Gln204, Gly224, and Arg225; that span reads DLKLYDIPET. The active-site Proton donor is Lys74.

It belongs to the OMP decarboxylase family. Type 1 subfamily. In terms of assembly, homodimer.

It carries out the reaction orotidine 5'-phosphate + H(+) = UMP + CO2. Its pathway is pyrimidine metabolism; UMP biosynthesis via de novo pathway; UMP from orotate: step 2/2. In terms of biological role, catalyzes the decarboxylation of orotidine 5'-monophosphate (OMP) to uridine 5'-monophosphate (UMP). The chain is Orotidine 5'-phosphate decarboxylase from Desulfosudis oleivorans (strain DSM 6200 / JCM 39069 / Hxd3) (Desulfococcus oleovorans).